Reading from the N-terminus, the 164-residue chain is UPF0304 protein ESA_00925 (164 aa).

Belongs to the UPF0304 family.

This is UPF0304 protein ESA_00925 from Cronobacter sakazakii (strain ATCC BAA-894) (Enterobacter sakazakii).